A 481-amino-acid polypeptide reads, in one-letter code: Innexin inx6 (481 aa).

The Cytoplasmic portion of the chain corresponds to 1–21; the sequence is MYAAVKPLSNYLRLKTVRIYD. The helical transmembrane segment at 22 to 42 threads the bilayer; the sequence is PIFTLHSKCTIVILLTCTFLL. The Extracellular portion of the chain corresponds to 43 to 144; it reads SAKQYFGEPI…VTKRMYLRYY (102 aa). A helical transmembrane segment spans residues 145 to 165; the sequence is QWVFMILLFQSLLFYFPSFLW. Residues 166–220 are Cytoplasmic-facing; sequence KVWEGQRMEQLCCEVGDALIVEATYRTRLQMLTRYFRAQFAPIHWCYSIKYAFCE. Residues 221–241 traverse the membrane as a helical segment; sequence LLNVFISILNFWLMDVVFNGF. The Extracellular segment spans residues 242-302; it reads WYKYIHALAA…VLPLNILNEK (61 aa). A helical membrane pass occupies residues 303–323; sequence IFAVLYVWFLFIALLAIMNIL. The Cytoplasmic portion of the chain corresponds to 324–481; sequence YRLLVICCPE…MDRFFHESHA (158 aa).

It belongs to the pannexin family. Uniform expression in the imaginal wing disk. Expressed in an outer layer of the pupal developing CNS. Also expressed in pupal retina: cone cells and primary pigment cells.

It localises to the cell membrane. It is found in the cell junction. The protein resides in the gap junction. Functionally, structural components of the gap junctions. The polypeptide is Innexin inx6 (Inx6) (Drosophila melanogaster (Fruit fly)).